The following is a 542-amino-acid chain: Protein MGF 505-11L (542 aa).

Belongs to the asfivirus MGF 505 family.

In terms of biological role, plays a role in virus cell tropism, and may be required for efficient virus replication in macrophages. The chain is Protein MGF 505-11L from African swine fever virus (isolate Warthog/Namibia/Wart80/1980) (ASFV).